The chain runs to 32 residues: Calcitonin (32 aa).

The cysteines at positions 1 and 7 are disulfide-linked. At P32 the chain carries Proline amide.

Belongs to the calcitonin family.

It localises to the secreted. In terms of biological role, causes a rapid but short-lived drop in the level of calcium and phosphate in blood by promoting the incorporation of those ions in the bones. This chain is Calcitonin, found in Aquarana catesbeiana (American bullfrog).